Reading from the N-terminus, the 60-residue chain is Cytotoxin 5 (60 aa).

Intrachain disulfides connect cysteine 3/cysteine 21, cysteine 14/cysteine 38, cysteine 42/cysteine 53, and cysteine 54/cysteine 59.

Belongs to the three-finger toxin family. Short-chain subfamily. Type IA cytotoxin sub-subfamily. In terms of assembly, monomer in solution; Homodimer and oligomer in the presence of negatively charged lipids forming a pore with a size ranging between 20 and 30 Angstroms. Expressed by the venom gland.

It is found in the secreted. The protein resides in the target cell membrane. Its function is as follows. Shows cytolytic activity on many different cells by forming pore in lipid membranes. In vivo, increases heart rate or kills the animal by cardiac arrest. In addition, it binds to heparin with high affinity, interacts with Kv channel-interacting protein 1 (KCNIP1) in a calcium-independent manner, and binds to integrin alpha-V/beta-3 (ITGAV/ITGB3) with moderate affinity. The protein is Cytotoxin 5 of Naja kaouthia (Monocled cobra).